The chain runs to 160 residues: Arginine repressor (160 aa).

Belongs to the ArgR family.

It localises to the cytoplasm. It functions in the pathway amino-acid biosynthesis; L-arginine biosynthesis [regulation]. Its function is as follows. Regulates arginine biosynthesis genes. The chain is Arginine repressor from Anaeromyxobacter dehalogenans (strain 2CP-1 / ATCC BAA-258).